A 169-amino-acid polypeptide reads, in one-letter code: MEVNFKQDKEIQEQIEKNIILTKLDDTLNYFRAHSFWPLTFGLACCAIEMMAAGGARYDIARFGYEVFRASPRQADLMIVAGTITEKMAPIVKKIYDQMPEPKWVIAMGSCATSGGPFVDSYNVVPGADTFLPVDVYIPGCPPRPEALIHGLLTLKEKIIHPKEVGRSE.

[4Fe-4S] cluster is bound by residues Cys45, Cys46, Cys111, and Cys141.

It belongs to the complex I 20 kDa subunit family. NDH-1 is composed of 14 different subunits. Subunits NuoB, C, D, E, F, and G constitute the peripheral sector of the complex. It depends on [4Fe-4S] cluster as a cofactor.

It is found in the cell membrane. The catalysed reaction is a quinone + NADH + 5 H(+)(in) = a quinol + NAD(+) + 4 H(+)(out). Its function is as follows. NDH-1 shuttles electrons from NADH, via FMN and iron-sulfur (Fe-S) centers, to quinones in the respiratory chain. The immediate electron acceptor for the enzyme in this species is believed to be a menaquinone. Couples the redox reaction to proton translocation (for every two electrons transferred, four hydrogen ions are translocated across the cytoplasmic membrane), and thus conserves the redox energy in a proton gradient. The protein is NADH-quinone oxidoreductase subunit B of Clostridium beijerinckii (strain ATCC 51743 / NCIMB 8052) (Clostridium acetobutylicum).